The chain runs to 153 residues: Endoribonuclease YbeY (153 aa).

3 residues coordinate Zn(2+): H114, H118, and H124.

Belongs to the endoribonuclease YbeY family. Requires Zn(2+) as cofactor.

Its subcellular location is the cytoplasm. Functionally, single strand-specific metallo-endoribonuclease involved in late-stage 70S ribosome quality control and in maturation of the 3' terminus of the 16S rRNA. The sequence is that of Endoribonuclease YbeY from Nitrosococcus oceani (strain ATCC 19707 / BCRC 17464 / JCM 30415 / NCIMB 11848 / C-107).